The sequence spans 200 residues: High frequency lysogenization protein HflD homolog (200 aa).

The protein belongs to the HflD family.

The protein localises to the cytoplasm. It is found in the cell inner membrane. The polypeptide is High frequency lysogenization protein HflD homolog (Pseudoalteromonas translucida (strain TAC 125)).